The chain runs to 216 residues: Probable GTP-binding protein EngB (216 aa).

The region spanning 21–192 (DAPQIALAGR…WRELRALAAG (172 aa)) is the EngB-type G domain. GTP is bound by residues 29–36 (GRSNVGKS), 56–60 (GKTRS), 75–78 (DLPG), 142–145 (TKGD), and 170–173 (VTAS). Mg(2+) is bound by residues Ser-36 and Thr-58. Residues 195–216 (SADDEAEDAPSDTIDAIDDVTA) are disordered. Positions 196–216 (ADDEAEDAPSDTIDAIDDVTA) are enriched in acidic residues.

The protein belongs to the TRAFAC class TrmE-Era-EngA-EngB-Septin-like GTPase superfamily. EngB GTPase family. Requires Mg(2+) as cofactor.

Functionally, necessary for normal cell division and for the maintenance of normal septation. The polypeptide is Probable GTP-binding protein EngB (Nitratidesulfovibrio vulgaris (strain DP4) (Desulfovibrio vulgaris)).